We begin with the raw amino-acid sequence, 282 residues long: MAIKKYKPTSNGRRNMTSLVYKDVITKTTPEKSLLDSQSHSAGRNNAGKMTVRHRGGGNKRQYRIIDFKRIKDDVPATVKAIEYDPNRTANIALLVYADGVKSYIIAPKGLKVGDKVQSGPEADIKTGNALPLKNIPFGTVIHNIELKPGKGGQLVRSAGTSAQLLGKANDEKYVLVRLSSGEVRMVLSVNRATIGAVGNEEHELVNVGKAGRTRWAGQRPHVRGSVMNPNDHPHGGGEGKAPVGLPSPLSPWGKKTVGKKTRSKKNKTEKFIVRHRKGSKM.

Disordered stretches follow at residues 31 to 56 and 226 to 282; these read EKSL…RHRG and SVMN…GSKM. Over residues 35–44 the composition is skewed to polar residues; it reads LDSQSHSAGR. The segment covering 257 to 266 has biased composition (basic residues); sequence TVGKKTRSKK.

It belongs to the universal ribosomal protein uL2 family. In terms of assembly, part of the 50S ribosomal subunit. Forms a bridge to the 30S subunit in the 70S ribosome.

Its function is as follows. One of the primary rRNA binding proteins. Required for association of the 30S and 50S subunits to form the 70S ribosome, for tRNA binding and peptide bond formation. It has been suggested to have peptidyltransferase activity; this is somewhat controversial. Makes several contacts with the 16S rRNA in the 70S ribosome. The chain is Large ribosomal subunit protein uL2 from Levilactobacillus brevis (strain ATCC 367 / BCRC 12310 / CIP 105137 / JCM 1170 / LMG 11437 / NCIMB 947 / NCTC 947) (Lactobacillus brevis).